A 173-amino-acid polypeptide reads, in one-letter code: Large ribosomal subunit protein uL14mz (173 aa).

The transit peptide at 1–61 directs the protein to the mitochondrion; it reads MAAAFASRLT…TVLKVVDNSG (61 aa).

This sequence belongs to the universal ribosomal protein uL14 family. In terms of assembly, part of the mitochondrial 50S ribosomal subunit. In terms of tissue distribution, mostly expressed in leaves and inflorescences, including floral organs and meristems, and, to a lower extent, in pistils.

The protein resides in the mitochondrion. In terms of biological role, binds to 23S rRNA in mitochondrion. This is Large ribosomal subunit protein uL14mz (HLP) from Arabidopsis thaliana (Mouse-ear cress).